The sequence spans 530 residues: Autoinducer-2 kinase (530 aa).

This sequence belongs to the FGGY kinase family.

It localises to the cytoplasm. The catalysed reaction is (S)-4,5-dihydroxypentane-2,3-dione + ATP = (2S)-2-hydroxy-3,4-dioxopentyl phosphate + ADP + H(+). Its function is as follows. Catalyzes the phosphorylation of autoinducer-2 (AI-2) to phospho-AI-2, which subsequently inactivates the transcriptional regulator LsrR and leads to the transcription of the lsr operon. Phosphorylates the ring-open form of (S)-4,5-dihydroxypentane-2,3-dione (DPD), which is the precursor to all AI-2 signaling molecules, at the C5 position. The chain is Autoinducer-2 kinase from Escherichia coli (strain ATCC 8739 / DSM 1576 / NBRC 3972 / NCIMB 8545 / WDCM 00012 / Crooks).